Reading from the N-terminus, the 860-residue chain is Leucine--tRNA ligase (860 aa).

Positions 42–52 match the 'HIGH' region motif; it reads PYPSGRLHMGH. The 'KMSKS' region motif lies at 619 to 623; it reads KMSKS. Position 622 (Lys622) interacts with ATP.

This sequence belongs to the class-I aminoacyl-tRNA synthetase family.

The protein resides in the cytoplasm. The catalysed reaction is tRNA(Leu) + L-leucine + ATP = L-leucyl-tRNA(Leu) + AMP + diphosphate. The protein is Leucine--tRNA ligase of Escherichia coli O9:H4 (strain HS).